Reading from the N-terminus, the 117-residue chain is G antigen 1 (117 aa).

The disordered stretch occupies residues 1-117; sequence MSWRGRSTYY…PEEGEGQSQC (117 aa). Composition is skewed to acidic residues over residues 32-45 and 87-96; these read FSDE…EEGE and ECEDGPDGQE.

This sequence belongs to the GAGE family. As to expression, expressed in a variety of tumor tissues but not in normal tissues, except testis.

In terms of biological role, antigen, recognized on melanoma by autologous cytolytic T-lymphocytes. This Homo sapiens (Human) protein is G antigen 1.